A 274-amino-acid chain; its full sequence is GPN-loop GTPase 3 (274 aa).

13–18 serves as a coordination point for GTP; it reads GVGKST. Residues 70–72 carry the Gly-Pro-Asn (GPN)-loop; involved in dimer interface motif; that stretch reads GPN. 173 to 176 is a binding site for GTP; sequence SKID. The interval 255-274 is disordered; the sequence is SESQEPKEPVEEIEEEVDFE. The segment covering 265 to 274 has biased composition (acidic residues); it reads EEIEEEVDFE.

It belongs to the GPN-loop GTPase family. In terms of assembly, heterodimers with GPN1 or GPN2. Binds to RNA polymerase II (RNAPII).

In terms of biological role, small GTPase required for proper nuclear import of RNA polymerase II and III (RNAPII and RNAPIII). May act at an RNAP assembly step prior to nuclear import. The polypeptide is GPN-loop GTPase 3 (Debaryomyces hansenii (strain ATCC 36239 / CBS 767 / BCRC 21394 / JCM 1990 / NBRC 0083 / IGC 2968) (Yeast)).